The chain runs to 124 residues: Glutaredoxin-2 (124 aa).

Residues Cys-13 and Cys-16 are joined by a disulfide bond.

Belongs to the glutaredoxin family. In terms of assembly, homodimer.

It is found in the host cytoplasm. Its function is as follows. Glutaredoxin necessary for virion morphogenesis and virus replication. Functions as a thiol-disulfide transfer protein between membrane-associated OPG128 and substrates OPG095 or OPG053. The complete pathway for formation of disulfide bonds in intracellular virion membrane proteins sequentially involves oxidation of OPG072, OPG128 and OPG088. Exhibit thioltransferase and dehydroascorbate reductase activities in vitro. The protein is Glutaredoxin-2 (OPG088) of Oryctolagus cuniculus (Rabbit).